The following is a 123-amino-acid chain: Small ribosomal subunit protein uS13 (123 aa).

The tract at residues 94 to 123 (GLPVRGQSTKSNARTRKGPRKTVAGKKSTK) is disordered. The span at 106–123 (ARTRKGPRKTVAGKKSTK) shows a compositional bias: basic residues.

It belongs to the universal ribosomal protein uS13 family. In terms of assembly, part of the 30S ribosomal subunit. Forms a loose heterodimer with protein S19. Forms two bridges to the 50S subunit in the 70S ribosome.

Functionally, located at the top of the head of the 30S subunit, it contacts several helices of the 16S rRNA. In the 70S ribosome it contacts the 23S rRNA (bridge B1a) and protein L5 of the 50S subunit (bridge B1b), connecting the 2 subunits; these bridges are implicated in subunit movement. Contacts the tRNAs in the A and P-sites. This chain is Small ribosomal subunit protein uS13, found in Mycoplasmopsis agalactiae (strain NCTC 10123 / CIP 59.7 / PG2) (Mycoplasma agalactiae).